Reading from the N-terminus, the 294-residue chain is MSEPIQPTRPAASGCPMHGAQAESWHDAQMDFSKSMSYGDYLALDQILNAQHPRSPDHNEMLFIVQHQTTELWMKLMLHELRAARDCVRNDDLPPAFKMLARVSRIMDQLVQAWNVLATMTPPEYSAMRPHLGQSSGFQSYQYREIEFILGNKNAAMLQPHAHQPEHYAQVKAALETPSLYDEAIRYMARHGFAFDADCIERDWSRPVTYNASVEAAWLEVYRDPTHHWELYELAEKFVDLEDAFRQWRFRHVTTVERVIGFKRGTGGTEGVNYLRKMLDVVLFPELWKLRTDL.

The interval 1-20 (MSEPIQPTRPAASGCPMHGA) is disordered. Residues 63–67 (FIVQH), Tyr-125, and Arg-129 contribute to the substrate site. His-252 is a heme binding site. Thr-266 contributes to the substrate binding site.

Belongs to the tryptophan 2,3-dioxygenase family. Homotetramer. Heme is required as a cofactor.

It carries out the reaction L-tryptophan + O2 = N-formyl-L-kynurenine. It functions in the pathway amino-acid degradation; L-tryptophan degradation via kynurenine pathway; L-kynurenine from L-tryptophan: step 1/2. Its function is as follows. Heme-dependent dioxygenase that catalyzes the oxidative cleavage of the L-tryptophan (L-Trp) pyrrole ring and converts L-tryptophan to N-formyl-L-kynurenine. Catalyzes the oxidative cleavage of the indole moiety. The protein is Tryptophan 2,3-dioxygenase 1 of Ralstonia nicotianae (strain ATCC BAA-1114 / GMI1000) (Ralstonia solanacearum).